The following is an 884-amino-acid chain: Alanine--tRNA ligase (884 aa).

Residues His-572, His-576, Cys-673, and His-677 each coordinate Zn(2+).

Belongs to the class-II aminoacyl-tRNA synthetase family. Requires Zn(2+) as cofactor.

The protein resides in the cytoplasm. It catalyses the reaction tRNA(Ala) + L-alanine + ATP = L-alanyl-tRNA(Ala) + AMP + diphosphate. Catalyzes the attachment of alanine to tRNA(Ala) in a two-step reaction: alanine is first activated by ATP to form Ala-AMP and then transferred to the acceptor end of tRNA(Ala). Also edits incorrectly charged Ser-tRNA(Ala) and Gly-tRNA(Ala) via its editing domain. The polypeptide is Alanine--tRNA ligase (Xylella fastidiosa (strain 9a5c)).